We begin with the raw amino-acid sequence, 285 residues long: MNEKNKNDESKHQEDKLQDQKMWNRINKFFSRSIGQSAKRAPKPKAISKSQSFRILNRFNAMERNSIHMIVILSIISLLLILLLSPLMRFQKVEITGNHDLTKAEVLAASGINKKIPAWQLLSEQHYFIQRAEKNSQIKKVKISYLNMQVAQIKIEENSKVGLVTKKDKNYYILADGKFIPAQSVGEKPQRLPNYEKFPNDKTIKRVAMQFNGISKALQNSVSEVIWSPDHEDDEKVILIMDDGNKVLIKASDIKNKLKYYPGMVAQIDKNGTFNFQVGTYFQQY.

Over residues 1–19 (MNEKNKNDESKHQEDKLQD) the composition is skewed to basic and acidic residues. The tract at residues 1-20 (MNEKNKNDESKHQEDKLQDQ) is disordered. Residues 1–66 (MNEKNKNDES…NRFNAMERNS (66 aa)) are Cytoplasmic-facing. A helical transmembrane segment spans residues 67–87 (IHMIVILSIISLLLILLLSPL). Positions 88–158 (MRFQKVEITG…QVAQIKIEEN (71 aa)) constitute a POTRA domain. The Extracellular segment spans residues 88–285 (MRFQKVEITG…FQVGTYFQQY (198 aa)).

The protein belongs to the FtsQ/DivIB family. DivIB subfamily.

The protein localises to the cell membrane. Functionally, cell division protein that may be involved in stabilizing or promoting the assembly of the division complex. This is Cell division protein DivIB from Weissella koreensis (strain KACC 15510).